The primary structure comprises 1010 residues: Plasma membrane ATPase 2 (1010 aa).

Residues 1 to 14 (MQRNNGEGRPEGMH) are compositionally biased toward basic and acidic residues. Disordered regions lie at residues 1 to 126 (MQRN…EDED) and 139 to 165 (QDQE…PEEL). Topologically, residues 1–201 (MQRNNGEGRP…KEEKTNNIKK (201 aa)) are cytoplasmic. The span at 25–34 (FKNNASPQDD) shows a compositional bias: polar residues. The segment covering 42 to 52 (YEEGGVEDSAV) has biased composition (acidic residues). Polar residues predominate over residues 68–106 (APNTHAQQANLQSGNTSITHETQSTSRGQEATTSPSLSA). The segment covering 140 to 151 (DQEEEQVEEEES) has biased composition (acidic residues). Residues 202–222 (FLSFFVGPIQFVMELAAALAA) traverse the membrane as a helical segment. The Extracellular segment spans residues 223 to 226 (GLRD). Residues 227–246 (WVDFGVICALLLLNATVGFV) traverse the membrane as a helical segment. Residues 247–377 (QEYQAGSIVD…SQGHFTEVLN (131 aa)) lie on the Cytoplasmic side of the membrane. The chain crosses the membrane as a helical span at residues 378–399 (GIGTILLVLVILTLLCIYTAAF). Over 400-410 (YRSVRLAALLE) the chain is Extracellular. Residues 411–433 (YTLAITIIGVPVGLPAVVTTTMA) form a helical membrane-spanning segment. Residues 434–805 (VGAAYLAKKK…LIIRNQLLNL (372 aa)) are Cytoplasmic-facing. Aspartate 464 functions as the 4-aspartylphosphate intermediate in the catalytic mechanism. Residues aspartate 720 and aspartate 724 each coordinate Mg(2+). The helical transmembrane segment at 806 to 824 (ELIVFIAIFADVATLAIAY) threads the bilayer. Residues 825–840 (DNAPYAMKPVKWNLPR) lie on the Extracellular side of the membrane. The helical transmembrane segment at 841-860 (LWGLATIVGILLAIGTWIVN) threads the bilayer. Residues 861–912 (TTMIAQGQNRGIVQNFGVQDEVLFLQISLTENWLIFITRCSGPFWSSFPSWQ) are Cytoplasmic-facing. Residues 913-933 (LSGAVLVVDILATLFCIFGWF) form a helical membrane-spanning segment. The Extracellular portion of the chain corresponds to 934 to 946 (KGGHQTSIVAVIR). The helical transmembrane segment at 947–963 (IWMYSFGIFCLIAGVYY) threads the bilayer. The Cytoplasmic portion of the chain corresponds to 964–1010 (ILSESSSFDRWMHGKHKERGTTRKLEDFVMQLQRTSTHHEAEGKVTS).

Belongs to the cation transport ATPase (P-type) (TC 3.A.3) family. Type IIIA subfamily. Post-translationally, in addition to transient phosphorylation of the active site Asp residue, this protein, but not the product of the pma1 locus, is phosphorylated efficiently in isolated plasma membrane.

It localises to the cell membrane. The catalysed reaction is ATP + H2O + H(+)(in) = ADP + phosphate + 2 H(+)(out). In terms of biological role, the plasma membrane ATPase of plants and fungi is a hydrogen ion pump. The proton gradient it generates drives the active transport of nutrients by H(+)-symport. The resulting external acidification and/or internal alkinization may mediate growth responses. The protein is Plasma membrane ATPase 2 (pma2) of Schizosaccharomyces pombe (strain 972 / ATCC 24843) (Fission yeast).